Consider the following 275-residue polypeptide: Large ribosomal subunit protein uL2c (275 aa).

2 disordered regions span residues 29–60 and 225–252; these read PEKS…GHKR and MNPV…PWGH. The span at 51 to 60 shows a compositional bias: basic residues; that stretch reads SRHRGGGHKR.

The protein belongs to the universal ribosomal protein uL2 family. Part of the 50S ribosomal subunit.

It is found in the plastid. The protein localises to the chloroplast. The protein is Large ribosomal subunit protein uL2c (rpl2) of Chlorokybus atmophyticus (Soil alga).